Here is a 279-residue protein sequence, read N- to C-terminus: Type III pantothenate kinase (279 aa).

6 to 13 (DIGNTLSK) lines the ATP pocket. Substrate is bound by residues Y92 and 99–102 (GVDR). The Proton acceptor role is filled by D101. D120 contacts K(+). An ATP-binding site is contributed by S123. T177 is a substrate binding site.

It belongs to the type III pantothenate kinase family. Homodimer. It depends on NH4(+) as a cofactor. K(+) serves as cofactor.

It localises to the cytoplasm. It catalyses the reaction (R)-pantothenate + ATP = (R)-4'-phosphopantothenate + ADP + H(+). Its pathway is cofactor biosynthesis; coenzyme A biosynthesis; CoA from (R)-pantothenate: step 1/5. Its function is as follows. Catalyzes the phosphorylation of pantothenate (Pan), the first step in CoA biosynthesis. This chain is Type III pantothenate kinase, found in Chromohalobacter salexigens (strain ATCC BAA-138 / DSM 3043 / CIP 106854 / NCIMB 13768 / 1H11).